Reading from the N-terminus, the 87-residue chain is Large ribosomal subunit protein bL27 (87 aa).

The segment at 1–20 (MAHKKAGGSSRNGRDSESKR) is disordered.

The protein belongs to the bacterial ribosomal protein bL27 family.

The chain is Large ribosomal subunit protein bL27 from Thiobacillus denitrificans (strain ATCC 25259 / T1).